Reading from the N-terminus, the 100-residue chain is Small ribosomal subunit protein uS14c (100 aa).

It belongs to the universal ribosomal protein uS14 family. As to quaternary structure, part of the 30S ribosomal subunit.

It is found in the plastid. The protein resides in the chloroplast. Binds 16S rRNA, required for the assembly of 30S particles. The polypeptide is Small ribosomal subunit protein uS14c (Gossypium barbadense (Sea Island cotton)).